Consider the following 749-residue polypeptide: uncharacterized protein (749 aa).

In terms of domain architecture, Helicase ATP-binding spans 63 to 243; that stretch reads FQYVQKGESI…QLTGKPMRLV (181 aa). 76–83 contributes to the ATP binding site; the sequence is TPTASGKT. Residues 185–188 carry the DEVH box motif; that stretch reads DELH. In terms of domain architecture, Helicase C-terminal spans 276-430; sequence EVNELAKEFL…SARINPENLI (155 aa).

It belongs to the helicase family.

This is an uncharacterized protein from Bacillus subtilis (strain 168).